Here is a 403-residue protein sequence, read N- to C-terminus: Alkaline protease 1 (403 aa).

Residues 1 to 21 form the signal peptide; it reads MQSIKRTLLLLGAILPAVLGA. A propeptide spanning residues 22 to 125 is cleaved from the precursor; the sequence is PVQETRRAAE…QIYYLDGLTT (104 aa). Positions 36–120 constitute an Inhibitor I9 domain; the sequence is KYIVTFKPGI…YVEEDQIYYL (85 aa). The 274-residue stretch at 130 to 403 folds into the Peptidase S8 domain; sequence PWGLGSISHK…PNLLAYNGNA (274 aa). Catalysis depends on charge relay system residues Asp-162 and His-193. Asn-253 carries an N-linked (GlcNAc...) asparagine glycan. The active-site Charge relay system is Ser-349.

The protein belongs to the peptidase S8 family.

It localises to the secreted. The enzyme catalyses Hydrolysis of proteins with broad specificity, and of Bz-Arg-OEt &gt; Ac-Tyr-OEt. Does not hydrolyze peptide amides.. Secreted alkaline protease that allows assimilation of proteinaceous substrates. This is Alkaline protease 1 (alp1) from Aspergillus flavus (strain ATCC 200026 / FGSC A1120 / IAM 13836 / NRRL 3357 / JCM 12722 / SRRC 167).